The primary structure comprises 199 residues: MNCVCRLVLVVLSLWPDRVVAPGPPAGSPRVSSDPRADLDSAVLLTRSLLADTRQLAAQMRDKFPADGDHSLDSLPTLAMSAGTLGSLQLPGVLTRLRVDLMSYLRHVQWLRRAGGPSLKTLEPELGALQARLERLLRRLQLLMSRLALPQAAPDQPVIPLGPPASAWGSIRAAHAILGGLHLTLDWAVRGLLLLKTRL.

The first 21 residues, 1 to 21 (MNCVCRLVLVVLSLWPDRVVA), serve as a signal peptide directing secretion. The tract at residues 182–190 (HLTLDWAVR) is important for interaction with IL11RA and for the stimulation of cell proliferation.

It belongs to the IL-6 superfamily. In terms of assembly, interacts with either IL11RA1 or IL11RA2 to associate with IL6ST, giving rise to a multimeric signaling complex.

The protein resides in the secreted. In terms of biological role, cytokine that stimulates the proliferation of hematopoietic stem cells and megakaryocyte progenitor cells and induces megakaryocyte maturation resulting in increased platelet production. Also promotes the proliferation of hepatocytes in response to liver damage. Binding to its receptor formed by IL6ST and either IL11RA1 or IL11RA2 activates a signaling cascade that promotes cell proliferation, also in the context of various cancers. Signaling leads to the activation of intracellular protein kinases and the phosphorylation of STAT3. The interaction with the membrane-bound IL11RA and IL6ST stimulates 'classic signaling', whereas the binding of IL11 and soluble IL11RA to IL6ST stimulates 'trans-signaling'. This Mus musculus (Mouse) protein is Interleukin-11.